Here is a 517-residue protein sequence, read N- to C-terminus: Putative pumilio homolog 21 (517 aa).

Disordered stretches follow at residues 33–57, 69–94, 107–130, and 175–201; these read NHQE…PPLL, KNNQ…PPLV, NHQE…PLLT, and FTPS…PPLS. Residues 42–51 are compositionally biased toward low complexity; that stretch reads NTNINSNNNH. The span at 69 to 84 shows a compositional bias: polar residues; sequence KNNQEPGESGNTTINR. The 355-residue stretch at 148–502 folds into the PUM-HD domain; the sequence is ESSNNNYPNL…NTLRVIQEEI (355 aa). Positions 177–190 are enriched in polar residues; it reads PSSLTQPDDSSSRY. Residues 258–293 form a Pumilio 1; degenerate repeat; sequence TTKRIFLHLATNQYGSQALRILFRRSPSLDHLLFCA. Residues 294 to 328 form a Pumilio 2 repeat; sequence VDTNFFLLMSDKYGRGLIIPAIRAVDKTKKESLYK. Residues 329–363 form a Pumilio 3; degenerate repeat; it reads LTYEYTLHLARLETGCLALNNVLQEIRGIYRDLIF. Pumilio repeat units follow at residues 364–400, 401–437, and 438–473; these read ECVA…AIAE, RLRG…EEFR, and GNAK…PLLR.

Its subcellular location is the cytoplasm. In terms of biological role, sequence-specific RNA-binding protein that regulates translation and mRNA stability by binding the 3'-UTR of target mRNAs. The protein is Putative pumilio homolog 21 (APUM21) of Arabidopsis thaliana (Mouse-ear cress).